Reading from the N-terminus, the 857-residue chain is Protein ARG5,6, mitochondrial (857 aa).

The 152-residue stretch at 341-492 folds into the N-acetyltransferase domain; it reads INRNSLRDFG…FDSSSIGSSL (152 aa). Positions 509–532 are disordered; that stretch reads GFHHSTVRRNTNPNPPLSEGKQTE. Cysteine 669 is an active-site residue.

This sequence in the N-terminal section; belongs to the acetylglutamate kinase family. The protein in the C-terminal section; belongs to the NAGSA dehydrogenase family.

The protein resides in the mitochondrion. The enzyme catalyses N-acetyl-L-glutamate 5-semialdehyde + phosphate + NADP(+) = N-acetyl-L-glutamyl 5-phosphate + NADPH + H(+). The catalysed reaction is N-acetyl-L-glutamate + ATP = N-acetyl-L-glutamyl 5-phosphate + ADP. It functions in the pathway amino-acid biosynthesis; L-arginine biosynthesis; N(2)-acetyl-L-ornithine from L-glutamate: step 2/4. The protein operates within amino-acid biosynthesis; L-arginine biosynthesis; N(2)-acetyl-L-ornithine from L-glutamate: step 3/4. In Candida albicans (Yeast), this protein is Protein ARG5,6, mitochondrial (ARG5,6).